Here is a 413-residue protein sequence, read N- to C-terminus: Serine/threonine-protein kinase ppk27 (413 aa).

Residues 102–403 (WSINTKITST…LKDFNKHGNF (302 aa)) enclose the Protein kinase domain. ATP contacts are provided by residues 108–116 (ITSTEQREV) and lysine 133. Aspartate 231 serves as the catalytic Proton acceptor.

The protein belongs to the protein kinase superfamily. Ser/Thr protein kinase family.

The protein resides in the cytoplasm. The enzyme catalyses L-seryl-[protein] + ATP = O-phospho-L-seryl-[protein] + ADP + H(+). The catalysed reaction is L-threonyl-[protein] + ATP = O-phospho-L-threonyl-[protein] + ADP + H(+). The chain is Serine/threonine-protein kinase ppk27 (ppk27) from Schizosaccharomyces pombe (strain 972 / ATCC 24843) (Fission yeast).